A 141-amino-acid polypeptide reads, in one-letter code: Hemoglobin subunit alpha (141 aa).

One can recognise a Globin domain in the interval 1 to 141 (VLSPDDKKHV…VSTVLTSKYR (141 aa)). Position 3 is a phosphoserine (serine 3). Residues lysine 7 and lysine 11 each carry the N6-succinyllysine modification. Lysine 16 carries the N6-acetyllysine; alternate modification. At lysine 16 the chain carries N6-succinyllysine; alternate. A Phosphotyrosine modification is found at tyrosine 24. Serine 35 is subject to Phosphoserine. The residue at position 40 (lysine 40) is an N6-succinyllysine. Serine 49 is subject to Phosphoserine. Residue histidine 58 coordinates O2. Position 87 (histidine 87) interacts with heme b. Serine 102 is subject to Phosphoserine. Threonine 108 carries the phosphothreonine modification. Phosphoserine occurs at positions 124 and 131. Phosphothreonine is present on residues threonine 134 and threonine 137. Phosphoserine is present on serine 138.

This sequence belongs to the globin family. Heterotetramer of two alpha chains and two beta chains. In terms of tissue distribution, red blood cells.

Functionally, involved in oxygen transport from the lung to the various peripheral tissues. Hemopressin acts as an antagonist peptide of the cannabinoid receptor CNR1. Hemopressin-binding efficiently blocks cannabinoid receptor CNR1 and subsequent signaling. In Theropithecus gelada (Gelada baboon), this protein is Hemoglobin subunit alpha (HBA).